An 85-amino-acid polypeptide reads, in one-letter code: Cell division topological specificity factor (85 aa).

It belongs to the MinE family.

Its function is as follows. Prevents the cell division inhibition by proteins MinC and MinD at internal division sites while permitting inhibition at polar sites. This ensures cell division at the proper site by restricting the formation of a division septum at the midpoint of the long axis of the cell. The sequence is that of Cell division topological specificity factor from Xylella fastidiosa (strain M23).